The following is a 156-amino-acid chain: Large ribosomal subunit protein bL9 (156 aa).

This sequence belongs to the bacterial ribosomal protein bL9 family.

Functionally, binds to the 23S rRNA. This chain is Large ribosomal subunit protein bL9, found in Treponema pallidum (strain Nichols).